A 93-amino-acid polypeptide reads, in one-letter code: Corticostatin 1 (93 aa).

The first 19 residues, 1-19 (MRTLILLAAILLAALQAQA), serve as a signal peptide directing secretion. A propeptide spanning residues 20-59 (ELFSVNVDEVLDQQQPGSDQDLVIHLTGEESSALQVPDTK) is cleaved from the precursor. Intrachain disulfides connect Cys-62–Cys-90, Cys-64–Cys-79, and Cys-69–Cys-89.

This sequence belongs to the alpha-defensin family.

Its subcellular location is the secreted. Its function is as follows. Microbicidal activity and inhibits corticotropin (ACTH) stimulated corticosterone production. This Oryctolagus cuniculus (Rabbit) protein is Corticostatin 1.